The chain runs to 197 residues: Probable GTP-binding protein EngB (197 aa).

In terms of domain architecture, EngB-type G spans 22–195 (ALPELALVGR…WQWIEERTGV (174 aa)). Residues 30–37 (GRSNVGKS), 57–61 (GKTQT), 75–78 (DVPG), 142–145 (TKVD), and 174–176 (FSA) each bind GTP. Mg(2+)-binding residues include Ser-37 and Thr-59.

The protein belongs to the TRAFAC class TrmE-Era-EngA-EngB-Septin-like GTPase superfamily. EngB GTPase family. Requires Mg(2+) as cofactor.

In terms of biological role, necessary for normal cell division and for the maintenance of normal septation. In Limosilactobacillus fermentum (strain NBRC 3956 / LMG 18251) (Lactobacillus fermentum), this protein is Probable GTP-binding protein EngB.